The sequence spans 205 residues: dITP/XTP pyrophosphatase (205 aa).

11 to 16 (TKNMGK) contributes to the substrate binding site. The Mg(2+) site is built by Glu44 and Asp73. The Proton acceptor role is filled by Asp73. Residues Ser74, 158-161 (FGYD), Lys181, and 186-187 (HR) each bind substrate.

It belongs to the HAM1 NTPase family. Homodimer. Requires Mg(2+) as cofactor.

The catalysed reaction is XTP + H2O = XMP + diphosphate + H(+). It carries out the reaction dITP + H2O = dIMP + diphosphate + H(+). The enzyme catalyses ITP + H2O = IMP + diphosphate + H(+). Pyrophosphatase that catalyzes the hydrolysis of nucleoside triphosphates to their monophosphate derivatives, with a high preference for the non-canonical purine nucleotides XTP (xanthosine triphosphate), dITP (deoxyinosine triphosphate) and ITP. Seems to function as a house-cleaning enzyme that removes non-canonical purine nucleotides from the nucleotide pool, thus preventing their incorporation into DNA/RNA and avoiding chromosomal lesions. The chain is dITP/XTP pyrophosphatase from Bacillus cereus (strain ATCC 14579 / DSM 31 / CCUG 7414 / JCM 2152 / NBRC 15305 / NCIMB 9373 / NCTC 2599 / NRRL B-3711).